We begin with the raw amino-acid sequence, 210 residues long: Large ribosomal subunit protein uL3 (210 aa).

At Gln-151 the chain carries N5-methylglutamine.

This sequence belongs to the universal ribosomal protein uL3 family. Part of the 50S ribosomal subunit. Forms a cluster with proteins L14 and L19. Methylated by PrmB.

In terms of biological role, one of the primary rRNA binding proteins, it binds directly near the 3'-end of the 23S rRNA, where it nucleates assembly of the 50S subunit. The sequence is that of Large ribosomal subunit protein uL3 from Aeromonas hydrophila subsp. hydrophila (strain ATCC 7966 / DSM 30187 / BCRC 13018 / CCUG 14551 / JCM 1027 / KCTC 2358 / NCIMB 9240 / NCTC 8049).